Consider the following 303-residue polypeptide: Lipoyl synthase (303 aa).

Residues cysteine 40, cysteine 45, cysteine 51, cysteine 67, cysteine 71, cysteine 74, and serine 280 each contribute to the [4Fe-4S] cluster site. The region spanning 53 to 269 (AVRKTATFMI…KEIALSKGFS (217 aa)) is the Radical SAM core domain.

Belongs to the radical SAM superfamily. Lipoyl synthase family. It depends on [4Fe-4S] cluster as a cofactor.

The protein resides in the cytoplasm. It carries out the reaction [[Fe-S] cluster scaffold protein carrying a second [4Fe-4S](2+) cluster] + N(6)-octanoyl-L-lysyl-[protein] + 2 oxidized [2Fe-2S]-[ferredoxin] + 2 S-adenosyl-L-methionine + 4 H(+) = [[Fe-S] cluster scaffold protein] + N(6)-[(R)-dihydrolipoyl]-L-lysyl-[protein] + 4 Fe(3+) + 2 hydrogen sulfide + 2 5'-deoxyadenosine + 2 L-methionine + 2 reduced [2Fe-2S]-[ferredoxin]. Its pathway is protein modification; protein lipoylation via endogenous pathway; protein N(6)-(lipoyl)lysine from octanoyl-[acyl-carrier-protein]. Its function is as follows. Catalyzes the radical-mediated insertion of two sulfur atoms into the C-6 and C-8 positions of the octanoyl moiety bound to the lipoyl domains of lipoate-dependent enzymes, thereby converting the octanoylated domains into lipoylated derivatives. In Halalkalibacterium halodurans (strain ATCC BAA-125 / DSM 18197 / FERM 7344 / JCM 9153 / C-125) (Bacillus halodurans), this protein is Lipoyl synthase.